We begin with the raw amino-acid sequence, 82 residues long: Sulfur carrier protein TusA (82 aa).

The active-site Cysteine persulfide intermediate is the Cys-19.

This sequence belongs to the sulfur carrier protein TusA family.

The protein resides in the cytoplasm. Its function is as follows. Sulfur carrier protein which probably makes part of a sulfur-relay system. This is Sulfur carrier protein TusA from Vibrio cholerae serotype O1 (strain ATCC 39541 / Classical Ogawa 395 / O395).